The sequence spans 113 residues: Iron-sulfur cluster insertion protein ErpA (113 aa).

Iron-sulfur cluster-binding residues include Cys-41, Cys-105, and Cys-107.

It belongs to the HesB/IscA family. In terms of assembly, homodimer. The cofactor is iron-sulfur cluster.

In terms of biological role, required for insertion of 4Fe-4S clusters for at least IspG. The sequence is that of Iron-sulfur cluster insertion protein ErpA from Colwellia psychrerythraea (strain 34H / ATCC BAA-681) (Vibrio psychroerythus).